A 227-amino-acid chain; its full sequence is MICOS complex subunit MIC19 (227 aa).

Glycine 2 is lipidated: N-myristoyl glycine. The residue at position 29 (serine 29) is a Phosphoserine. Disordered regions lie at residues 34–61 and 73–92; these read DRMK…SDEE and EQAK…KELD. The segment covering 39–49 has biased composition (polar residues); that stretch reads SSPSGSKSQRY. Tyrosine 49 carries the post-translational modification Phosphotyrosine. Phosphoserine occurs at positions 50, 56, and 58. Lysine 142 is modified (N6-acetyllysine). Positions 180–222 constitute a CHCH domain; that stretch reads HPVCADLQAKILQCYRENTHQTLKCSALATQYMHCVNHAKQSM. Short sequence motifs (cx9C motif) lie at residues 183 to 193 and 204 to 214; these read CADLQAKILQC and CSALATQYMHC. 2 cysteine pairs are disulfide-bonded: cysteine 183–cysteine 214 and cysteine 193–cysteine 204.

The protein belongs to the MICOS complex subunit Mic19 family. Metazoan Mic19 subfamily. Component of the mitochondrial contact site and cristae organizing system (MICOS) complex, composed of at least MICOS10/MIC10, CHCHD3/MIC19, CHCHD6/MIC25, APOOL/MIC27, IMMT/MIC60, APOO/MIC23/MIC26 and MICOS13/MIC13. This complex was also known under the names MINOS or MitOS complex. The MICOS complex associates with mitochondrial outer membrane proteins SAMM50, MTX1 and MTX2 (together described as components of the mitochondrial outer membrane sorting assembly machinery (SAM) complex) and DNAJC11, mitochondrial inner membrane protein TMEM11 and with HSPA9. The MICOS and SAM complexes together with DNAJC11 are part of a large protein complex spanning both membranes termed the mitochondrial intermembrane space bridging (MIB) complex. Interacts with HSPA1A/HSPA1B and OPA1, preferentially with the soluble OPA1 form. Interacts with IMMT/MIC60. In terms of assembly, (Microbial infection) Interacts with human cytomegalovirus protein UL13; this interaction alters cristae architecture. As to expression, detected at low levels in brain, placenta, lung, liver, kidney and pancreas with increased levels in heart and skeletal muscle. Higher expression in primary lung cancers than in normal lung tissue.

It is found in the mitochondrion inner membrane. It localises to the cytoplasm. Its subcellular location is the nucleus. The protein resides in the mitochondrion. Functionally, component of the MICOS complex, a large protein complex of the mitochondrial inner membrane that plays crucial roles in the maintenance of crista junctions, inner membrane architecture, and formation of contact sites to the outer membrane. Plays an important role in the maintenance of the MICOS complex stability and the mitochondrial cristae morphology. Has also been shown to function as a transcription factor which binds to the BAG1 promoter and represses BAG1 transcription. The polypeptide is MICOS complex subunit MIC19 (CHCHD3) (Homo sapiens (Human)).